A 157-amino-acid chain; its full sequence is Thioredoxin 2 (157 aa).

An N-terminal signal peptide occupies residues 1–23; it reads MKKYIFFFLFSFINFFFVYDVTC. Residues 46–157 form the Thioredoxin domain; it reads LRMFKKVPRL…DLIALIKKHL (112 aa). Catalysis depends on nucleophile residues C82 and C85. An intrachain disulfide couples C82 to C85.

Belongs to the thioredoxin family. In terms of assembly, monomer. Component of the Plasmodium translocon of exported proteins (PTEX) complex composed of HSP101, EXP2, PTEX150, PTEX88 and TRX2. Post-translationally, the disulfide bond between Cys-82 and Cys-85 acts as a redox-active center and is reduced by thioredoxin reductase TRXR.

Its subcellular location is the parasitophorous vacuole membrane. Its function is as follows. Participates in various redox reactions through the reversible oxidation of its active center dithiol to a disulfide and catalyzes dithiol-disulfide exchange reactions. As part of the translocon PTEX complex, plays a role in the export of parasite proteins into the host erythrocyte. The translocon PTEX complex is a multi-protein machinery resident in the parasite parasitophorous vacuolar membrane, responsible for protein secretion into host cells. May contribute to the unfolding of proteins containing the PEXEL localization motif before their passage through the translocon or regulate the PTEX complex function. The sequence is that of Thioredoxin 2 from Plasmodium falciparum (isolate 3D7).